Reading from the N-terminus, the 337-residue chain is Prenyltransferase terC (337 aa).

Asp111 and Asp115 together coordinate Mg(2+).

Belongs to the FPP/GGPP synthase family. Mg(2+) is required as a cofactor.

Its pathway is secondary metabolite biosynthesis. Prenyltransferase; part of the gene cluster that mediates the biosynthesis of terpendoles, indole-diterpene (IDT) mycotoxins including terpendole I, terpendole K, terpendole C, as well as the kinesin Eg5 inhibitor terpendole E. Terpendoles biosynthesis begins with the synthesis of geranylgeranyl diphosphate (GGPP) by a yet unidentified GGPP synthase. Condensation of indole-3-glycerol phosphate with GGPP by the prenyltransferase terC then forms 3-geranylgeranylindole (3-GGI), followed by epoxidation and cyclization of this intermediate (by the FAD-dependent monooxygeanse terM and the terpene cyclase terB) to form paspaline. The cytochrome monooxygenase terQ then hydroxylates paspalline at C-11 to yield terpendole E. The cytochrome monooxygenase terP converts terpendole E to 13-desoxyterpendole I, and terQ converts 13-desoxyterpendole I into terpendole I. TerF and terK are required for conversion of terpendole I to terpendole C which is further converted to terpendole K. This is Prenyltransferase terC from Tolypocladium album (Soil fungus).